The sequence spans 223 residues: ATP-dependent dethiobiotin synthetase BioD (223 aa).

An ATP-binding site is contributed by 12–17 (EIGKTH). A Mg(2+)-binding site is contributed by Thr16. Lys37 is a catalytic residue. Ser41 contributes to the substrate binding site. Residues Asp52 and 118–121 (EGVG) contribute to the ATP site. Asp52 and Glu118 together coordinate Mg(2+).

It belongs to the dethiobiotin synthetase family. As to quaternary structure, homodimer. Mg(2+) is required as a cofactor.

The protein resides in the cytoplasm. The enzyme catalyses (7R,8S)-7,8-diammoniononanoate + CO2 + ATP = (4R,5S)-dethiobiotin + ADP + phosphate + 3 H(+). The protein operates within cofactor biosynthesis; biotin biosynthesis; biotin from 7,8-diaminononanoate: step 1/2. Functionally, catalyzes a mechanistically unusual reaction, the ATP-dependent insertion of CO2 between the N7 and N8 nitrogen atoms of 7,8-diaminopelargonic acid (DAPA, also called 7,8-diammoniononanoate) to form a ureido ring. In Acidiphilium cryptum (strain JF-5), this protein is ATP-dependent dethiobiotin synthetase BioD.